The sequence spans 370 residues: 3-isopropylmalate dehydrogenase (370 aa).

77 to 90 (GPKWDAVPYEVRPE) contributes to the NAD(+) binding site. Substrate contacts are provided by arginine 97, arginine 107, arginine 135, and aspartate 226. Positions 226, 250, and 254 each coordinate Mg(2+). An NAD(+)-binding site is contributed by 290-302 (GSAPDIAGTGVAN).

The protein belongs to the isocitrate and isopropylmalate dehydrogenases family. LeuB type 1 subfamily. In terms of assembly, homodimer. It depends on Mg(2+) as a cofactor. Mn(2+) serves as cofactor.

The protein resides in the cytoplasm. The catalysed reaction is (2R,3S)-3-isopropylmalate + NAD(+) = 4-methyl-2-oxopentanoate + CO2 + NADH. It functions in the pathway amino-acid biosynthesis; L-leucine biosynthesis; L-leucine from 3-methyl-2-oxobutanoate: step 3/4. Its function is as follows. Catalyzes the oxidation of 3-carboxy-2-hydroxy-4-methylpentanoate (3-isopropylmalate) to 3-carboxy-4-methyl-2-oxopentanoate. The product decarboxylates to 4-methyl-2 oxopentanoate. This Rhizobium meliloti (strain 1021) (Ensifer meliloti) protein is 3-isopropylmalate dehydrogenase.